The sequence spans 75 residues: Small ribosomal subunit protein bS21 (75 aa).

The protein belongs to the bacterial ribosomal protein bS21 family.

This chain is Small ribosomal subunit protein bS21, found in Brucella abortus (strain S19).